The following is a 945-amino-acid chain: Valine--tRNA ligase (945 aa).

The 'HIGH' region signature appears at 42 to 52 (PNVTGTLHMGH). The 'KMSKS' region signature appears at 552-556 (KMSKS). Residue lysine 555 coordinates ATP. Residues 879–945 (DKATETARLS…VQTQLSKLKD (67 aa)) adopt a coiled-coil conformation.

It belongs to the class-I aminoacyl-tRNA synthetase family. ValS type 1 subfamily. As to quaternary structure, monomer.

It is found in the cytoplasm. The catalysed reaction is tRNA(Val) + L-valine + ATP = L-valyl-tRNA(Val) + AMP + diphosphate. In terms of biological role, catalyzes the attachment of valine to tRNA(Val). As ValRS can inadvertently accommodate and process structurally similar amino acids such as threonine, to avoid such errors, it has a 'posttransfer' editing activity that hydrolyzes mischarged Thr-tRNA(Val) in a tRNA-dependent manner. This chain is Valine--tRNA ligase, found in Neisseria meningitidis serogroup A / serotype 4A (strain DSM 15465 / Z2491).